The primary structure comprises 155 residues: 6,7-dimethyl-8-ribityllumazine synthase (155 aa).

5-amino-6-(D-ribitylamino)uracil-binding positions include Phe-23, 57 to 59, and 81 to 83; these read AFE and AVI. 86–87 is a binding site for (2S)-2-hydroxy-3-oxobutyl phosphate; the sequence is ST. His-89 functions as the Proton donor in the catalytic mechanism. Phe-114 lines the 5-amino-6-(D-ribitylamino)uracil pocket. Arg-128 is a (2S)-2-hydroxy-3-oxobutyl phosphate binding site.

Belongs to the DMRL synthase family.

It carries out the reaction (2S)-2-hydroxy-3-oxobutyl phosphate + 5-amino-6-(D-ribitylamino)uracil = 6,7-dimethyl-8-(1-D-ribityl)lumazine + phosphate + 2 H2O + H(+). It participates in cofactor biosynthesis; riboflavin biosynthesis; riboflavin from 2-hydroxy-3-oxobutyl phosphate and 5-amino-6-(D-ribitylamino)uracil: step 1/2. Its function is as follows. Catalyzes the formation of 6,7-dimethyl-8-ribityllumazine by condensation of 5-amino-6-(D-ribitylamino)uracil with 3,4-dihydroxy-2-butanone 4-phosphate. This is the penultimate step in the biosynthesis of riboflavin. This Desulfatibacillum aliphaticivorans protein is 6,7-dimethyl-8-ribityllumazine synthase.